Reading from the N-terminus, the 89-residue chain is Large ribosomal subunit protein eL34 (89 aa).

It belongs to the eukaryotic ribosomal protein eL34 family.

In Methanococcus maripaludis (strain C6 / ATCC BAA-1332), this protein is Large ribosomal subunit protein eL34.